Consider the following 607-residue polypeptide: Dolichyl-diphosphooligosaccharide--protein glycosyltransferase subunit 1 (607 aa).

The first 23 residues, 1–23 (MEAPVARLFLLLLLGSWTPAPGS), serve as a signal peptide directing secretion. Topologically, residues 24 to 434 (ASSEAPPLIN…VVHYTFNKVL (411 aa)) are lumenal. K187 carries the N6-acetyllysine modification. N299 is a glycosylation site (N-linked (GlcNAc...) asparagine). Residues 435–455 (MLQEPLLVVAAFYILFFTVII) traverse the membrane as a helical segment. At 456 to 607 (YVRLDFSITK…TKIDHILDAL (152 aa)) the chain is on the cytoplasmic side. K538 carries the N6-acetyllysine; alternate modification. Residue K538 forms a Glycyl lysine isopeptide (Lys-Gly) (interchain with G-Cter in SUMO2); alternate linkage.

This sequence belongs to the OST1 family. Component of the oligosaccharyltransferase (OST) complex. OST exists in two different complex forms which contain common core subunits RPN1, RPN2, OST48, OST4, DAD1 and TMEM258, either STT3A or STT3B as catalytic subunits, and form-specific accessory subunits. STT3A complex assembly occurs through the formation of 3 subcomplexes. Subcomplex 1 contains RPN1 and TMEM258, subcomplex 2 contains the STT3A-specific subunits STT3A, DC2/OSTC, and KCP2 as well as the core subunit OST4, and subcomplex 3 contains RPN2, DAD1, and OST48. The STT3A complex can form stable complexes with the Sec61 complex or with both the Sec61 and TRAP complexes. Interacts with TMEM35A/NACHO. Post-translationally, ubiquitinated by the ECS(ASB11) complex. Ufmylated by UFL1 in response to endoplasmic reticulum stress, promoting reticulophagy of endoplasmic reticulum sheets.

Its subcellular location is the endoplasmic reticulum membrane. It functions in the pathway protein modification; protein glycosylation. Its function is as follows. Subunit of the oligosaccharyl transferase (OST) complex that catalyzes the initial transfer of a defined glycan (Glc(3)Man(9)GlcNAc(2) in eukaryotes) from the lipid carrier dolichol-pyrophosphate to an asparagine residue within an Asn-X-Ser/Thr consensus motif in nascent polypeptide chains, the first step in protein N-glycosylation. N-glycosylation occurs cotranslationally and the complex associates with the Sec61 complex at the channel-forming translocon complex that mediates protein translocation across the endoplasmic reticulum (ER). All subunits are required for a maximal enzyme activity. This is Dolichyl-diphosphooligosaccharide--protein glycosyltransferase subunit 1 from Macaca fascicularis (Crab-eating macaque).